The chain runs to 103 residues: Large ribosomal subunit protein bL21 (103 aa).

Belongs to the bacterial ribosomal protein bL21 family. In terms of assembly, part of the 50S ribosomal subunit. Contacts protein L20.

Functionally, this protein binds to 23S rRNA in the presence of protein L20. This is Large ribosomal subunit protein bL21 from Paraburkholderia phytofirmans (strain DSM 17436 / LMG 22146 / PsJN) (Burkholderia phytofirmans).